The chain runs to 455 residues: Putative FBD-associated F-box protein At5g56400 (455 aa).

The F-box domain maps to 32–81 (VDKISDLPEDLLVHILSLLPTTNDIVATSGVSKRWESLWTKVHKLRFNDR). The region spanning 372–421 (WNQQPSYVPECLTKSLEIFEWRNYKATFRERDVAVYILKNSTCLKKTVIS) is the FBD domain.

This is Putative FBD-associated F-box protein At5g56400 from Arabidopsis thaliana (Mouse-ear cress).